Consider the following 356-residue polypeptide: Na(+)/H(+) exchange regulatory cofactor NHE-RF1 (356 aa).

S2 is modified (N-acetylserine). Phosphoserine is present on residues S2 and S46. The PDZ 1 domain occupies 14–94 (LCCLEKGPNG…AVRLLVVDPE (81 aa)). The interval 113–142 (AQEKSEHTEPPAAADTKKAGDQNEAEKSHL) is disordered. Positions 151-231 (LCTMKKGPNG…EAKLLVVDKE (81 aa)) constitute a PDZ 2 domain. Residues 265-356 (NSREALVEPA…SKKNELFSNL (92 aa)) form a disordered region. Phosphoserine is present on residues S266, S277, S287, and S288. The span at 272–288 (EPASESPRPALARSASS) shows a compositional bias: low complexity. Position 290 is a phosphothreonine (T290). Residues S291 and S299 each carry the phosphoserine modification. The span at 307–317 (EPSSTSSSSDP) shows a compositional bias: low complexity. Over residues 346–356 (WSKKNELFSNL) the composition is skewed to basic and acidic residues.

Homodimer, and heterodimer with NHERF2. Binds the N-termini of EZR, RDX and MSN. Binds the C-termini of PDGFRA, PDGFRB, ADRB2, NOS2 and CFTR. Binds ARHGAP17, EPI64, RACK1, OPRK1, GNAQ, CTNNB1 and PLCB3. Binds PDZK1. Interacts with CLCN3. Binds the C-terminus of PAG1. In resting T-cells, part of a PAG1-NHERF1-MSN complex which is disrupted upon TCR activation. Forms a complex with CFTR and SLC4A7. Forms a complex with SLC4A7 and ATP6V1B1. Interacts with TRPC4 (via the PDZ-binding domain). Directly interacts with HTR4. Interacts (via the PDZ 1 domain) with PODXL (via the C-terminal PDZ-binding motif DTHL); interaction is not detected in glomerular epithelium cells. Interacts (via the PDZ 1 domain) with PODXL (via the C-terminal PDZ-binding motif DTHL); the interaction take place early in the secretory pathway and is necessary for its apical membrane sorting. Interacts with SLC26A3. Interacts with MCC. Interacts with SLC34A1. Interacts (via the PDZ domains) with SLC26A6 isoform 4 and isoform 5. Interacts (via PDZ domains) with ACE2 (via PDZ-binding motif); the interaction may enhance ACE2 membrane residence.

The protein resides in the cytoplasm. Its subcellular location is the apical cell membrane. It is found in the cell projection. It localises to the filopodium. The protein localises to the ruffle. The protein resides in the microvillus. Its subcellular location is the endomembrane system. Its function is as follows. Scaffold protein that connects plasma membrane proteins with members of the ezrin/moesin/radixin family and thereby helps to link them to the actin cytoskeleton and to regulate their surface expression. Necessary for recycling of internalized ADRB2. Was first known to play a role in the regulation of the activity and subcellular location of SLC9A3. Necessary for cAMP-mediated phosphorylation and inhibition of SLC9A3. Involved in sperm capacitation. May participate in the regulation of the chloride and bicarbonate homeostasis in spermatozoa. May enhance Wnt signaling. May participate in HTR4 targeting to microvilli. Involved in the regulation of phosphate reabsorption in the renal proximal tubules. The sequence is that of Na(+)/H(+) exchange regulatory cofactor NHE-RF1 (Nherf1) from Rattus norvegicus (Rat).